A 144-amino-acid polypeptide reads, in one-letter code: Gastric inhibitory polypeptide (144 aa).

The signal sequence occupies residues 1–21 (MVALKTCSLLLVLLFLAVGLG). 2 consecutive propeptides follow at residues 22–42 (EKEE…PRGP) and 87–144 (EARA…LRSQ). Residues 92–112 (ELAGQSQRNEEKEAQGSSLPK) are disordered.

This sequence belongs to the glucagon family. Highly expressed in the duodenum and jejunum.

It localises to the secreted. Potent stimulator of insulin secretion and relatively poor inhibitor of gastric acid secretion. This is Gastric inhibitory polypeptide (Gip) from Rattus norvegicus (Rat).